The sequence spans 375 residues: Succinyl-diaminopimelate desuccinylase (375 aa).

His75 serves as a coordination point for Zn(2+). The active site involves Asp77. Asp106 is a Zn(2+) binding site. Glu136 acts as the Proton acceptor in catalysis. Glu137, Glu165, and His348 together coordinate Zn(2+).

It belongs to the peptidase M20A family. DapE subfamily. As to quaternary structure, homodimer. It depends on Zn(2+) as a cofactor. Co(2+) is required as a cofactor.

The catalysed reaction is N-succinyl-(2S,6S)-2,6-diaminopimelate + H2O = (2S,6S)-2,6-diaminopimelate + succinate. It participates in amino-acid biosynthesis; L-lysine biosynthesis via DAP pathway; LL-2,6-diaminopimelate from (S)-tetrahydrodipicolinate (succinylase route): step 3/3. Its function is as follows. Catalyzes the hydrolysis of N-succinyl-L,L-diaminopimelic acid (SDAP), forming succinate and LL-2,6-diaminopimelate (DAP), an intermediate involved in the bacterial biosynthesis of lysine and meso-diaminopimelic acid, an essential component of bacterial cell walls. The polypeptide is Succinyl-diaminopimelate desuccinylase (Novosphingobium aromaticivorans (strain ATCC 700278 / DSM 12444 / CCUG 56034 / CIP 105152 / NBRC 16084 / F199)).